Consider the following 447-residue polypeptide: MDRMFGTDGVRGIANTELTAQMAYNLGRAGAYVLTEGAHKPKILVAKDTRISGDMLESALVAGILSVGAEAVILGVVPTPAVAYLTREYNADAGVMISASHNPVEYNGIKFFNNKGYKLSDELEDGIQKVIESDFEGVPSPIGIDLGRERIEVAALEDYTEFAKQTIPYNLKGMKIALDCANGASYKSAVKAFRDLGADVFVINDNPDGTNINKNCGSTHPEELMDYVVKKGCDLGFAFDGDADRCLAVDENGKLINGDFILMLCANYLKEIGKLKDDTLVVTVMSNLGLDIACRGLGIKLEKTKVGDRYVLEEMTKDNYVLGGEQSGHVIFLDYNTTGDGLVTALQVASIVKKKEKTLSELCSVMKELPQVLVNATVPNDKKNIYLEDAEIVEAIKEIEAKLNGVGRVLIRPSGTEPLVRVMLEGENQVEIDEMAHGLANLILSKI.

The active-site Phosphoserine intermediate is the serine 100. Mg(2+)-binding residues include serine 100, aspartate 240, aspartate 242, and aspartate 244. A Phosphoserine modification is found at serine 100.

It belongs to the phosphohexose mutase family. Mg(2+) is required as a cofactor. Activated by phosphorylation.

It catalyses the reaction alpha-D-glucosamine 1-phosphate = D-glucosamine 6-phosphate. Its function is as follows. Catalyzes the conversion of glucosamine-6-phosphate to glucosamine-1-phosphate. This chain is Phosphoglucosamine mutase, found in Clostridium botulinum (strain Alaska E43 / Type E3).